The following is a 204-amino-acid chain: GATA transcription factor 14 (204 aa).

The span at 57–66 shows a compositional bias: basic and acidic residues; sequence REFDTNDSKP. Residues 57 to 102 are disordered; the sequence is REFDTNDSKPSRNFSNLPTATRGRLHAPKRSGNKRGRQKRLSFKSP. Over residues 79-98 the composition is skewed to basic residues; that stretch reads GRLHAPKRSGNKRGRQKRLS. The GATA-type zinc finger occupies 111-165; sequence GITDKSCSHCGTRKTPLWREGPRGAGTLCNACGMRYRTGRLLPEYRPASSPDFKP. The tract at residues 180-204 is disordered; that stretch reads RERKSSPPNSFGFSESYHSTRKLGF. A compositionally biased stretch (polar residues) spans 185-196; that stretch reads SPPNSFGFSESY.

Belongs to the type IV zinc-finger family. Class A subfamily.

It localises to the nucleus. Its function is as follows. Transcriptional activator that specifically binds 5'-GATA-3' or 5'-GAT-3' motifs within gene promoters. May be involved in the regulation of some light-responsive genes. In Arabidopsis thaliana (Mouse-ear cress), this protein is GATA transcription factor 14 (GATA14).